A 397-amino-acid chain; its full sequence is Digeranylgeranylglycerophospholipid reductase 1 (397 aa).

FAD contacts are provided by alanine 18, aspartate 37, cysteine 48, alanine 49, glycine 51, arginine 104, alanine 128, aspartate 284, glycine 296, and isoleucine 297.

It belongs to the geranylgeranyl reductase family. DGGGPL reductase subfamily. FAD is required as a cofactor.

The catalysed reaction is a 2,3-bis-O-phytanyl-sn-glycerol 1-phospholipid + 8 A = a 2,3-bis-O-(geranylgeranyl)-sn-glycerol 1-phospholipid + 8 AH2. It carries out the reaction 2,3-bis-O-(phytanyl)-sn-glycerol 1-phosphate + 8 A = 2,3-bis-O-(geranylgeranyl)-sn-glycerol 1-phosphate + 8 AH2. It catalyses the reaction CDP-2,3-bis-O-(geranylgeranyl)-sn-glycerol + 8 AH2 = CDP-2,3-bis-O-(phytanyl)-sn-glycerol + 8 A. The enzyme catalyses archaetidylserine + 8 AH2 = 2,3-bis-O-phytanyl-sn-glycero-3-phospho-L-serine + 8 A. It participates in membrane lipid metabolism; glycerophospholipid metabolism. Its function is as follows. Is involved in the reduction of 2,3-digeranylgeranylglycerophospholipids (unsaturated archaeols) into 2,3-diphytanylglycerophospholipids (saturated archaeols) in the biosynthesis of archaeal membrane lipids. Catalyzes the formation of archaetidic acid (2,3-di-O-phytanyl-sn-glyceryl phosphate) from 2,3-di-O-geranylgeranylglyceryl phosphate (DGGGP) via the hydrogenation of each double bond of the isoprenoid chains. Is also probably able to reduce double bonds of geranyl groups in CDP-2,3-bis-O-(geranylgeranyl)-sn-glycerol and archaetidylserine, thus acting at various stages in the biosynthesis of archaeal membrane lipids. The sequence is that of Digeranylgeranylglycerophospholipid reductase 1 from Methanothermobacter thermautotrophicus (strain ATCC 29096 / DSM 1053 / JCM 10044 / NBRC 100330 / Delta H) (Methanobacterium thermoautotrophicum).